Consider the following 120-residue polypeptide: uncharacterized protein (120 aa).

2 helical membrane-spanning segments follow: residues 26–46 (PSTS…PAGM) and 57–77 (LLFA…LTLV).

The protein resides in the membrane. This is an uncharacterized protein from Saccharomyces cerevisiae (strain ATCC 204508 / S288c) (Baker's yeast).